Here is a 217-residue protein sequence, read N- to C-terminus: Ribulose-phosphate 3-epimerase (217 aa).

Serine 6 is a substrate binding site. Residues histidine 29, aspartate 31, and histidine 62 each contribute to the a divalent metal cation site. Aspartate 31 serves as the catalytic Proton acceptor. Substrate is bound by residues histidine 62, 138–141, 171–173, and 193–194; these read GFGG, DGG, and GS. Aspartate 171 contacts a divalent metal cation. The active-site Proton donor is aspartate 171.

This sequence belongs to the ribulose-phosphate 3-epimerase family. A divalent metal cation serves as cofactor.

It carries out the reaction D-ribulose 5-phosphate = D-xylulose 5-phosphate. The protein operates within carbohydrate degradation. Its function is as follows. Catalyzes the reversible epimerization of D-ribulose 5-phosphate to D-xylulose 5-phosphate. The sequence is that of Ribulose-phosphate 3-epimerase from Helicobacter pylori (strain J99 / ATCC 700824) (Campylobacter pylori J99).